The following is a 474-amino-acid chain: 3-isopropylmalate dehydratase large subunit (474 aa).

[4Fe-4S] cluster contacts are provided by Cys352, Cys413, and Cys416.

The protein belongs to the aconitase/IPM isomerase family. LeuC type 1 subfamily. In terms of assembly, heterodimer of LeuC and LeuD. [4Fe-4S] cluster is required as a cofactor.

It carries out the reaction (2R,3S)-3-isopropylmalate = (2S)-2-isopropylmalate. It functions in the pathway amino-acid biosynthesis; L-leucine biosynthesis; L-leucine from 3-methyl-2-oxobutanoate: step 2/4. Catalyzes the isomerization between 2-isopropylmalate and 3-isopropylmalate, via the formation of 2-isopropylmaleate. The protein is 3-isopropylmalate dehydratase large subunit of Pseudomonas syringae pv. syringae (strain B728a).